We begin with the raw amino-acid sequence, 507 residues long: MVPLLKMTNIVKCFGTVKALDGVNIQLQQGEILSLCGENGSGKSTLMKVLCGIYPHGDFEGEIVFDGQVVEVKTIAETEALGIAIIHQELTLVKELSVLENLFLGAEIETFGVLDFDRMHAEAVKLLKKVKLDVPPDTRVGDLGVGQQQLIEIAKALSKNARLLVLDEPTAPLTESETDILLELVNDLREEGVSCIYISHKLNEVKAISDQICVIRDGQHIGTRDAKSMTTDDIITMMVGREMKQLFPREEHDIGDIVLEVKNISAWSKANSHIRKVDDVSFVLRKGEILGVSGLVGAGRTELMECLFGCYQGRYSGEVYLQGQKLTLQSCHDALDAGIAMVPEDRKRHGIIPIMSVGENITLASLTAFTQSGVLNDVKEASAISESIKALTVKTPNADLAIKHLSGGNQQKAILARFLLVNPTVLILDEPTRGIDVGAKYEIYKLMFQLVKQGISVIMVSSELPEVLGISDRVLVMHEGKIKGDLINDNLSQEQIMDCALSEKVTA.

ABC transporter domains follow at residues 5 to 242 (LKMT…VGRE) and 259 to 504 (LEVK…LSEK). ATP is bound at residue 37–44 (GENGSGKS).

Belongs to the ABC transporter superfamily. Xylose importer (TC 3.A.1.2.4) family. The complex is composed of two ATP-binding proteins (XylG), two transmembrane proteins (XylH) and a solute-binding protein (XylF).

It localises to the cell inner membrane. The enzyme catalyses D-xylose(out) + ATP + H2O = D-xylose(in) + ADP + phosphate + H(+). Its function is as follows. Part of the ABC transporter complex XylFGH involved in xylose import. Responsible for energy coupling to the transport system. This is Xylose import ATP-binding protein XylG from Photobacterium profundum (strain SS9).